The sequence spans 117 residues: MSRRNKNGPKLELRLNLSPPPSQASQMSLVRSPNRSNTTSPSSCVSSETNQEENETITSMVLVGCPRCLMYVMLSDDDPKCPKCKSTVLLDFLQENAFAATTATAANTRRKKKTWWN.

The disordered stretch occupies residues 1–56 (MSRRNKNGPKLELRLNLSPPPSQASQMSLVRSPNRSNTTSPSSCVSSETNQEENET). The EAR signature appears at 10-15 (KLELRL). The segment covering 31–49 (RSPNRSNTTSPSSCVSSET) has biased composition (low complexity).

In terms of assembly, interacts with GL2. Interacts with TPL.

It localises to the nucleus. In terms of biological role, acts as a negative regulator of root hair development redundantly with GIR1. GIR1 and GIR2 may function as adapter proteins that associate with GL2 and participate in the control of root hair formation. GIR1 and GIR2 may function as adapter proteins that associate with TPL and participate in the repression of root gene expression. This Arabidopsis thaliana (Mouse-ear cress) protein is Protein GL2-INTERACTING REPRESSOR 2.